A 570-amino-acid chain; its full sequence is Sulfite reductase [NADPH] hemoprotein beta-component (570 aa).

The [4Fe-4S] cluster site is built by C434, C440, C479, and C483. C483 lines the siroheme pocket.

This sequence belongs to the nitrite and sulfite reductase 4Fe-4S domain family. Alpha(8)-beta(8). The alpha component is a flavoprotein, the beta component is a hemoprotein. The cofactor is siroheme. [4Fe-4S] cluster is required as a cofactor.

It carries out the reaction hydrogen sulfide + 3 NADP(+) + 3 H2O = sulfite + 3 NADPH + 4 H(+). The protein operates within sulfur metabolism; hydrogen sulfide biosynthesis; hydrogen sulfide from sulfite (NADPH route): step 1/1. Component of the sulfite reductase complex that catalyzes the 6-electron reduction of sulfite to sulfide. This is one of several activities required for the biosynthesis of L-cysteine from sulfate. This is Sulfite reductase [NADPH] hemoprotein beta-component from Salmonella typhi.